A 65-amino-acid chain; its full sequence is DNA gyrase inhibitor YacG (65 aa).

Residues cysteine 9, cysteine 12, cysteine 28, and cysteine 32 each contribute to the Zn(2+) site. The segment at 44-65 (EKRIPSSSDLSESDDWSEEPKQ) is disordered. Residues 54 to 65 (SESDDWSEEPKQ) show a composition bias toward acidic residues.

Belongs to the DNA gyrase inhibitor YacG family. In terms of assembly, interacts with GyrB. Zn(2+) serves as cofactor.

Functionally, inhibits all the catalytic activities of DNA gyrase by preventing its interaction with DNA. Acts by binding directly to the C-terminal domain of GyrB, which probably disrupts DNA binding by the gyrase. The polypeptide is DNA gyrase inhibitor YacG (Escherichia coli O6:H1 (strain CFT073 / ATCC 700928 / UPEC)).